Here is a 162-residue protein sequence, read N- to C-terminus: Calcium vector protein (162 aa).

At A2 the chain carries N-acetylalanine. 4 consecutive EF-hand domains span residues 12–47 (EEKD…LGQT), 49–84 (TKRE…KWVR), 86–121 (DDEE…VGEE), and 123–158 (LTDA…SKNA). An N6,N6,N6-trimethyllysine modification is found at K96. Ca(2+)-binding residues include D99, N101, D103, and E110. An N6,N6,N6-trimethyllysine modification is found at K117. Positions 136, 138, 140, and 147 each coordinate Ca(2+).

It localises to the cytoplasm. The exact function of this protein is not yet known. It interacts with CAVPT, a protein also of unknown function, in a calcium-dependent way. This protein binds two calcium ions. This chain is Calcium vector protein, found in Branchiostoma lanceolatum (Common lancelet).